Consider the following 61-residue polypeptide: Small ribosomal subunit protein uS14 (61 aa).

Zn(2+) is bound by residues Cys-24, Cys-27, Cys-40, and Cys-43.

The protein belongs to the universal ribosomal protein uS14 family. Zinc-binding uS14 subfamily. Part of the 30S ribosomal subunit. Contacts proteins S3 and S10. The cofactor is Zn(2+).

Functionally, binds 16S rRNA, required for the assembly of 30S particles and may also be responsible for determining the conformation of the 16S rRNA at the A site. This is Small ribosomal subunit protein uS14 from Staphylococcus aureus (strain USA300 / TCH1516).